The chain runs to 276 residues: uncharacterized protein (276 aa).

Residues 1–70 form a disordered region; the sequence is MSKAKSPIKS…SDDDEEDSPN (70 aa). A compositionally biased stretch (basic and acidic residues) spans 21–35; the sequence is VLREKKVKDAEKAEH. The region spanning 105–183 is the RRM domain; it reads GVLYVGRLPH…KLLQCKVIPE (79 aa). A disordered region spans residues 249 to 276; sequence VSHPKAASPVASKKSSKKKNKKVLAAHK. Low complexity predominate over residues 252–261; it reads PKAASPVASK. Over residues 262 to 276 the composition is skewed to basic residues; sequence KSSKKKNKKVLAAHK.

The protein localises to the nucleus. It is found in the nucleolus. This is an uncharacterized protein from Schizosaccharomyces pombe (strain 972 / ATCC 24843) (Fission yeast).